The primary structure comprises 286 residues: Simplagrin (286 aa).

Residues 1-20 (MKKFCLIFLLLALTALHVKG) form the signal peptide. Residues 17 to 179 (HVKGSPIPDE…GSSSGGEESA (163 aa)) form a disordered region. Acidic residues-rich tracts occupy residues 24–69 (PDEE…DGQE) and 103–129 (VESGGDEQNDGEENGSQENGEEVTGGE). Asn116 carries N-linked (GlcNAc...) asparagine glycosylation. Positions 166-177 (SNRAGSSSGGEE) are enriched in low complexity.

The protein belongs to the aegyptin family. Monomeric in solution; likely has an elongated non-globular form. Interacts with human and rat collagens (via a RGQOGVMGF peptide, where O is hydroxyproline). Post-translationally, not glycosylated. As to expression, salivary gland.

The protein resides in the secreted. In terms of biological role, inhibits host platelet aggregation induced by low concentrations of collagen via blocking the von Willebrand Factor (VWF) interaction with collagen. The sequence is that of Simplagrin from Simulium nigrimanum (Black fly).